A 148-amino-acid chain; its full sequence is 3-dehydroquinate dehydratase (148 aa).

Tyrosine 22 (proton acceptor) is an active-site residue. The substrate site is built by asparagine 73, histidine 79, and aspartate 86. Catalysis depends on histidine 99, which acts as the Proton donor. Residues 100-101 and arginine 110 contribute to the substrate site; that span reads LS.

It belongs to the type-II 3-dehydroquinase family. In terms of assembly, homododecamer.

It carries out the reaction 3-dehydroquinate = 3-dehydroshikimate + H2O. The protein operates within metabolic intermediate biosynthesis; chorismate biosynthesis; chorismate from D-erythrose 4-phosphate and phosphoenolpyruvate: step 3/7. Catalyzes a trans-dehydration via an enolate intermediate. The protein is 3-dehydroquinate dehydratase of Prochlorococcus marinus (strain MIT 9211).